The sequence spans 143 residues: Type II secretion system core protein G (143 aa).

Positions 1–17 (MIKRSITRSPSRAGQAG) are cleaved as a propeptide — leader sequence. Met18 bears the N-methylmethionine mark. The helical transmembrane segment at 18 to 38 (MSLLEIIIVIVLIGAVLTLVG) threads the bilayer.

Belongs to the GSP G family. Type II secretion system is composed of four main components: the outer membrane complex, the inner membrane complex, the cytoplasmic secretion ATPase and the periplasm-spanning pseudopilus. Forms homomultimers. Interacts with pseudopilin tip complex component XpsJ as well as XpsI and XcpH. Interacts with XpsN and secretin XpsD. Post-translationally, cleaved by the prepilin peptidase. In terms of processing, methylated by prepilin peptidase at the amino group of the N-terminal methionine once the leader sequence is cleaved.

The protein resides in the cell inner membrane. Its function is as follows. Core component of the type II secretion system required for the energy-dependent secretion of extracellular factors such as proteases and toxins from the periplasm. Pseudopilin (pilin-like) protein that polymerizes to form the pseudopilus. Further polymerization triggers pseudopilus growth. This chain is Type II secretion system core protein G (xpsG), found in Xanthomonas campestris pv. campestris (strain ATCC 33913 / DSM 3586 / NCPPB 528 / LMG 568 / P 25).